Reading from the N-terminus, the 461-residue chain is MEHRLWGGRFSEPTAAEMRRFNDSFHFDVRLAEVDIAGSIAWAGALLQAGLINETEHADLVRGLELVRAEFANGSFVAAAGDEDIHTAVERRLRELIGDAALKLHTGRSRNDQVATDMRLYTIGIARQLDRRLRDLQLALLAQAEQHTATVMPGYTHLQRAQPITFGHWCLAYVEMFARDRSRLNDAIRRMRVLPLGAGALAGNSLGVERERLTELLDEFDELSANSLDAVSDRDFVAEVLFACALIGVHLSRLAEDVILYASAEFGFLELADAYSTGSSLMPQKKNPDSMELLRGKSGRLLGNLVALLTVLKGLPLTYNKDMQEDKEPLFDSFDTLDLGLQVAAAAIATMTVRPERMAAALDDAMLATDLADELVRRGVPFRVAHSKVGQLVQRALTRGVSLRQLPLADYQAVEPSLDASIYDVFDMQRSVAQKASYGGTAPQRVREQCARWRDSLLNDE.

This sequence belongs to the lyase 1 family. Argininosuccinate lyase subfamily.

The protein resides in the cytoplasm. It carries out the reaction 2-(N(omega)-L-arginino)succinate = fumarate + L-arginine. It functions in the pathway amino-acid biosynthesis; L-arginine biosynthesis; L-arginine from L-ornithine and carbamoyl phosphate: step 3/3. The sequence is that of Argininosuccinate lyase from Chloroflexus aurantiacus (strain ATCC 29366 / DSM 635 / J-10-fl).